The following is a 422-amino-acid chain: 2,3-bisphosphoglycerate-independent phosphoglycerate mutase (422 aa).

A disordered region spans residues 173-194 (DADPKRVGKPVKDVKPTSDDPA). Basic and acidic residues predominate over residues 174-190 (ADPKRVGKPVKDVKPTS).

It belongs to the BPG-independent phosphoglycerate mutase family. A-PGAM subfamily.

It catalyses the reaction (2R)-2-phosphoglycerate = (2R)-3-phosphoglycerate. The protein operates within carbohydrate degradation; glycolysis; pyruvate from D-glyceraldehyde 3-phosphate: step 3/5. Catalyzes the interconversion of 2-phosphoglycerate and 3-phosphoglycerate. The sequence is that of 2,3-bisphosphoglycerate-independent phosphoglycerate mutase from Methanopyrus kandleri (strain AV19 / DSM 6324 / JCM 9639 / NBRC 100938).